Reading from the N-terminus, the 276-residue chain is E3 ubiquitin-protein ligase CCNB1IP1 (276 aa).

The RING-type; atypical zinc finger occupies 10-52 (CNYRKCRIKLSGYAWVTACSHIFCDQHGSGEFSRSPAICPACN). The stretch at 146-182 (MKKVLEEYKKKFSDISEKLMERNRQYQKLQGLYDSLR) forms a coiled coil.

In terms of assembly, interacts with CCNB1, UBE2L3 and NF2. In terms of processing, ubiquitinated; autoubiquitinated. Post-translationally, phosphorylated by CDK1 on serine or threonine residues (in vitro). In terms of tissue distribution, expressed predominantly in the testes and 17 day embryos (corresponding to prophase I in females). Weakly or not expressed in other tissues.

Its subcellular location is the nucleus. The protein localises to the chromosome. The catalysed reaction is S-ubiquitinyl-[E2 ubiquitin-conjugating enzyme]-L-cysteine + [acceptor protein]-L-lysine = [E2 ubiquitin-conjugating enzyme]-L-cysteine + N(6)-ubiquitinyl-[acceptor protein]-L-lysine.. It functions in the pathway protein modification; protein ubiquitination. Ubiquitin E3 ligase that acts as a limiting factor for crossing-over during meiosis: required during zygonema to limit the colocalization of RNF212 with MutS-gamma-associated recombination sites and thereby establish early differentiation of crossover and non-crossover sites. Later, it is directed by MutL-gamma to stably accumulate at designated crossover sites. Probably promotes the dissociation of RNF212 and MutS-gamma to allow the progression of recombination and the implementation of the final steps of crossing over. Modulates cyclin-B levels and participates in the regulation of cell cycle progression through the G2 phase. Overexpression causes delayed entry into mitosis. The polypeptide is E3 ubiquitin-protein ligase CCNB1IP1 (Ccnb1ip1) (Mus musculus (Mouse)).